Reading from the N-terminus, the 187-residue chain is Large ribosomal subunit protein uL22 (187 aa).

Residues 159–171 show a composition bias toward basic and acidic residues; sequence VSKPTDDAAPKVK. The tract at residues 159–187 is disordered; it reads VSKPTDDAAPKVKKESKRKQRRQLARGEF. Over residues 172-187 the composition is skewed to basic residues; that stretch reads KESKRKQRRQLARGEF.

This sequence belongs to the universal ribosomal protein uL22 family.

The polypeptide is Large ribosomal subunit protein uL22 (rpl-17) (Caenorhabditis elegans).